A 163-amino-acid chain; its full sequence is SsrA-binding protein (163 aa).

Belongs to the SmpB family.

The protein resides in the cytoplasm. Its function is as follows. Required for rescue of stalled ribosomes mediated by trans-translation. Binds to transfer-messenger RNA (tmRNA), required for stable association of tmRNA with ribosomes. tmRNA and SmpB together mimic tRNA shape, replacing the anticodon stem-loop with SmpB. tmRNA is encoded by the ssrA gene; the 2 termini fold to resemble tRNA(Ala) and it encodes a 'tag peptide', a short internal open reading frame. During trans-translation Ala-aminoacylated tmRNA acts like a tRNA, entering the A-site of stalled ribosomes, displacing the stalled mRNA. The ribosome then switches to translate the ORF on the tmRNA; the nascent peptide is terminated with the 'tag peptide' encoded by the tmRNA and targeted for degradation. The ribosome is freed to recommence translation, which seems to be the essential function of trans-translation. This chain is SsrA-binding protein, found in Corynebacterium diphtheriae (strain ATCC 700971 / NCTC 13129 / Biotype gravis).